The primary structure comprises 404 residues: Diphosphomevalonate decarboxylase mvd1 (404 aa).

(R)-5-diphosphomevalonate contacts are provided by residues Tyr25–Lys28, Arg82, Ser161–Arg166, and Thr217.

It belongs to the diphosphomevalonate decarboxylase family. Homodimer.

The catalysed reaction is (R)-5-diphosphomevalonate + ATP = isopentenyl diphosphate + ADP + phosphate + CO2. It participates in isoprenoid biosynthesis; isopentenyl diphosphate biosynthesis via mevalonate pathway; isopentenyl diphosphate from (R)-mevalonate: step 3/3. Diphosphomevalonate decarboxylase; part of the second module of ergosterol biosynthesis pathway that includes the middle steps of the pathway. Mvd1 converts diphosphomevalonate into isopentenyl diphosphate. The second module is carried out in the vacuole and involves the formation of farnesyl diphosphate, which is also an important intermediate in the biosynthesis of ubiquinone, dolichol, heme and prenylated proteins. Activity by the mevalonate kinase erg12 (AFUA_4G07780) first converts mevalonate into 5-phosphomevalonate. 5-phosphomevalonate is then further converted to 5-diphosphomevalonate by the phosphomevalonate kinase erg8 (AFUA_5G10680). The diphosphomevalonate decarboxylase mvd1 (AFUA_4G07130) then produces isopentenyl diphosphate. The isopentenyl-diphosphate delta-isomerase idi1 (AFUA_6G11160) then catalyzes the 1,3-allylic rearrangement of the homoallylic substrate isopentenyl (IPP) to its highly electrophilic allylic isomer, dimethylallyl diphosphate (DMAPP). Finally the farnesyl diphosphate synthase erg20 (AFUA_5G02450) catalyzes the sequential condensation of isopentenyl pyrophosphate with dimethylallyl pyrophosphate, and then with the resultant geranylpyrophosphate to the ultimate product farnesyl pyrophosphate. The sequence is that of Diphosphomevalonate decarboxylase mvd1 from Aspergillus fumigatus (strain ATCC MYA-4609 / CBS 101355 / FGSC A1100 / Af293) (Neosartorya fumigata).